The following is a 269-amino-acid chain: tRNA pseudouridine synthase A (269 aa).

Residue aspartate 55 is the Nucleophile of the active site. Position 111 (tyrosine 111) interacts with substrate.

Belongs to the tRNA pseudouridine synthase TruA family.

It catalyses the reaction uridine(38/39/40) in tRNA = pseudouridine(38/39/40) in tRNA. Its function is as follows. Formation of pseudouridine at positions 38, 39 and 40 in the anticodon stem and loop of transfer RNAs. This is tRNA pseudouridine synthase A from Methanosarcina barkeri (strain Fusaro / DSM 804).